A 529-amino-acid polypeptide reads, in one-letter code: Beta-hexosaminidase subunit alpha (529 aa).

The signal sequence occupies residues 1-22 (MAGSTLRFSLLLAAAFAGRATA). The propeptide occupies 23 to 88 (LWPWPQYIQT…RFPHPIEKRH (66 aa)). Residues C58 and C104 are joined by a disulfide bond. N-linked (GlcNAc...) asparagine glycans are attached at residues N115, N157, and N295. The cysteines at positions 277 and 328 are disulfide-linked. Residue E323 is the Proton donor of the active site. Positions 423–424 (NH) are critical for hydrolysis GM2 gangliosides. C505 and C522 are joined by a disulfide.

It belongs to the glycosyl hydrolase 20 family. There are 3 beta-hexosaminidase isozymes: isozyme A (hexosaminidase A) is a heterodimer composed of one subunit alpha and one subunit beta (chain A and B); isozyme B (hexosaminidase B) is a homodimer of two beta subunits (two chains A and B); isozyme S (hexosaminidase S) is a homodimer of two alpha subunits. The composition of the dimer (isozyme A versus isozyme S) has a significant effect on the substrate specificity of the alpha subunit active site.

The protein resides in the lysosome. It catalyses the reaction Hydrolysis of terminal non-reducing N-acetyl-D-hexosamine residues in N-acetyl-beta-D-hexosaminides.. The catalysed reaction is N-acetyl-beta-D-galactosaminyl-(1-&gt;4)-beta-D-3-sulfogalactosyl-(1-&gt;4)-beta-D-glucosyl-(1&lt;-&gt;1')-ceramide + H2O = a beta-D-3-sulfogalactosyl-(1-&gt;4)-beta-D-glucosyl-(1&lt;-&gt;1')-ceramide + N-acetyl-beta-D-galactosamine. The enzyme catalyses a ganglioside GM2 (d18:1(4E)) + H2O = a ganglioside GM3 (d18:1(4E)) + N-acetyl-beta-D-galactosamine. It carries out the reaction a ganglioside GM2 + H2O = a ganglioside GM3 + N-acetyl-beta-D-galactosamine. It catalyses the reaction beta-D-GalNAc-(1-&gt;4)-alpha-L-IdoA-(1-&gt;3)-beta-D-GalNAc-4-sulfate-(1-&gt;4)-alpha-L-IdoA-(1-&gt;3)-D-GalNAc-4-sulfate + H2O = alpha-L-IdoA-(1-&gt;3)-beta-D-GalNAc-4-sulfate-(1-&gt;4)-alpha-L-IdoA-(1-&gt;3)-D-GalNAc-4-sulfate + N-acetyl-D-galactosamine. The catalysed reaction is N-acetyl-beta-D-6-sulfogalactosaminyl-(1-&gt;4)-alpha-L-iduronyl-(1-&gt;3)-N-acetyl-D-6-sulfogalactosamine + H2O = alpha-L-iduronyl-(1-&gt;3)-N-acetyl-D-6-sulfogalactosamine + N-acetyl-D-6-sulfogalactosamine. Its activity is regulated as follows. Addition of GM2A stimulates the hydrolysis of sulfated glycosphingolipid SM2 and the ganglioside GM2. In terms of biological role, hydrolyzes the non-reducing end N-acetyl-D-hexosamine and/or sulfated N-acetyl-D-hexosamine of glycoconjugates, such as the oligosaccharide moieties from proteins and neutral glycolipids, or from certain mucopolysaccharides. The isozyme S is as active as the isozyme A on the anionic bis-sulfated glycans, the chondroitin-6-sulfate trisaccharide (C6S-3), and the dermatan sulfate pentasaccharide, and the sulfated glycosphingolipid SM2. The isozyme B does not hydrolyze each of these substrates, however hydrolyzes efficiently neutral oligosaccharide. Only the isozyme A is responsible for the degradation of GM2 gangliosides in the presence of GM2A. This is Beta-hexosaminidase subunit alpha from Bos taurus (Bovine).